Consider the following 486-residue polypeptide: Cytochrome P450 monooxygenase 1 (486 aa).

An N-terminal signal peptide occupies residues 1 to 21 (MSHFLPTLILTSLTLVAYVLA). N-linked (GlcNAc...) asparagine glycosylation occurs at asparagine 346. Residue cysteine 430 participates in heme binding. N-linked (GlcNAc...) asparagine glycosylation occurs at asparagine 434.

Belongs to the cytochrome P450 family. The cofactor is heme.

Its pathway is mycotoxin biosynthesis. Cytochrome P450 monooxygenase; part of the gene cluster that mediates the biosynthesis of aphidicolin, a specific inhibitor of eukaryotic DNA synthesis and DNA polymerase alpha. The geranylgeranyl pyrophosphate synthase GGS is required for supplying a sufficient amount of geranylgeranyl diphosphate (GGDP), the general precursor of diterpenes. The diterpene synthase ACS then catalyzes the conversion of geranylgeranyl diphosphate to aphidicolan-16-beta-ol via the intermediate syn-copalyldiphosphate (syn-CDP). In addition to aphidicolan-16-beta-ol, the enzyme also produces low levels of amphidicol-15-ene and amphidicol-16-ene. The cytochrome P450 monooxygenase P450-2 then catalyzes the two-step hydroxylation from aphidicolan-16-beta-ol to 3-deoxyaphidicolin via a 17,3-deoxyaphidicolin intermediate. Finally, the cytochrome P450 monooxygenase P450-1 converts 3-deoxyaphidicolin to aphidicolin. The protein is Cytochrome P450 monooxygenase 1 (PbP450-1) of Neocamarosporium betae (Beet black rot fungus).